The sequence spans 440 residues: Beta-1,3-galactosyl-O-glycosyl-glycoprotein beta-1,6-N-acetylglucosaminyltransferase 3 (440 aa).

The Cytoplasmic segment spans residues 1–12; it reads MKMTGWKKKLCR. A helical; Signal-anchor for type II membrane protein membrane pass occupies residues 13-30; sequence GHHLWALGCYMLLAVVAL. At 31 to 440 the chain is on the lumenal side; sequence RLSLRLKCDV…RHKAIYGTEL (410 aa). N-linked (GlcNAc...) asparagine glycosylation is found at Asn72 and Asn108. 4 cysteine pairs are disulfide-bonded: Cys73–Cys230, Cys164–Cys384, Cys185–Cys212, and Cys393–Cys425.

It belongs to the glycosyltransferase 14 family. N-glycosylated. Primarily expressed in mucus-secreting tissues.

It is found in the golgi apparatus membrane. It catalyses the reaction a 3-O-[beta-D-galactosyl-(1-&gt;3)-N-acetyl-alpha-D-galactosaminyl]-L-seryl-[protein] + UDP-N-acetyl-alpha-D-glucosamine = 3-O-{beta-D-galactosyl-(1-&gt;3)-[N-acetyl-beta-D-glucosaminyl-(1-&gt;6)]-N-acetyl-alpha-D-galactosaminyl}-L-seryl-[protein] + UDP + H(+). The enzyme catalyses a 3-O-[beta-D-galactosyl-(1-&gt;3)-N-acetyl-alpha-D-galactosaminyl]-L-threonyl-[protein] + UDP-N-acetyl-alpha-D-glucosamine = a 3-O-{beta-D-galactosyl-(1-&gt;3)-[N-acetyl-beta-D-glucosaminyl-(1-&gt;6)]-N-acetyl-alpha-D-galactosaminyl}-L-threonyl-[protein] + UDP + H(+). It carries out the reaction a beta-D-Gal-(1-&gt;4)-beta-D-GlcNAc-(1-&gt;3)-beta-D-Gal-(1-&gt;4)-beta-D-GlcNAc derivative + UDP-N-acetyl-alpha-D-glucosamine = a beta-D-Gal-(1-&gt;4)-beta-D-GlcNAc-(1-&gt;3)-[beta-D-GlcNAc-(1-&gt;6)]-beta-D-Gal-(1-&gt;4)-N-acetyl-beta-D-glucosaminyl derivative + UDP + H(+). The catalysed reaction is 3-O-[N-acetyl-beta-D-glucosaminyl-(1-&gt;3)-N-acetyl-alpha-D-galactosaminyl]-L-seryl-[protein] + UDP-N-acetyl-alpha-D-glucosamine = 3-O-[N-acetyl-beta-D-glucosaminyl-(1-&gt;3)-[N-acetyl-beta-D-glucosaminyl-(1-&gt;6)]-N-acetyl-alpha-D-galactosaminyl]-L-seryl-[protein] + UDP + H(+). It catalyses the reaction a 3-O-[N-acetyl-beta-D-glucosaminyl-(1-&gt;3)-N-acetyl-alpha-D-galactosaminyl]-L-threonyl-[protein] + UDP-N-acetyl-alpha-D-glucosamine = 3-O-[N-acetyl-beta-D-glucosaminyl-(1-&gt;3)-[N-acetyl-beta-D-glucosaminyl-(1-&gt;6)]-N-acetyl-alpha-D-galactosaminyl]-L-threonyl-[protein] + UDP + H(+). It functions in the pathway protein modification; protein glycosylation. In terms of biological role, glycosyltransferase that can synthesize all known mucin beta 6 N-acetylglucosaminides. Mediates core 2 and core 4 O-glycan branching, 2 important steps in mucin-type biosynthesis. Also has I-branching enzyme activity by converting linear into branched poly-N-acetyllactosaminoglycans, leading to introduce the blood group I antigen during embryonic development. This is Beta-1,3-galactosyl-O-glycosyl-glycoprotein beta-1,6-N-acetylglucosaminyltransferase 3 (GCNT3) from Bos taurus (Bovine).